We begin with the raw amino-acid sequence, 396 residues long: GDSL esterase/lipase ACHE (396 aa).

An N-terminal signal peptide occupies residues 1-31; that stretch reads MATAATATAGSRAAVLLLLSLALALALRPSD. The active-site Nucleophile is the serine 49. Asparagine 108, asparagine 126, asparagine 151, asparagine 196, and asparagine 339 each carry an N-linked (GlcNAc...) asparagine glycan. Active-site residues include aspartate 359 and histidine 362.

Belongs to the 'GDSL' lipolytic enzyme family.

The protein resides in the secreted. In terms of biological role, esterase that can hydrolyze acetylthiocholine and propionylthiocholine in vitro. Substrate preference is propionylthiocholine &gt; acetylthiocholine. Possesses extremely low activity against butyrylthiocholine. This chain is GDSL esterase/lipase ACHE, found in Zea mays (Maize).